Here is a 444-residue protein sequence, read N- to C-terminus: Glutamate--tRNA ligase (444 aa).

The 'HIGH' region motif lies at 12–22; that stretch reads PSPTGFLHVGG. The short motif at 213 to 217 is the 'KMSKS' region element; the sequence is KMSKR. Lys-216 contacts ATP.

It belongs to the class-I aminoacyl-tRNA synthetase family. Glutamate--tRNA ligase type 1 subfamily. In terms of assembly, monomer.

The protein resides in the cytoplasm. The catalysed reaction is tRNA(Glu) + L-glutamate + ATP = L-glutamyl-tRNA(Glu) + AMP + diphosphate. Its function is as follows. Catalyzes the attachment of glutamate to tRNA(Glu) in a two-step reaction: glutamate is first activated by ATP to form Glu-AMP and then transferred to the acceptor end of tRNA(Glu). The chain is Glutamate--tRNA ligase from Methylacidiphilum infernorum (isolate V4) (Methylokorus infernorum (strain V4)).